Reading from the N-terminus, the 127-residue chain is MRHQKSGRKFSRTSAHREAMFKNMAASLFKHELIKTTLPKAKELRRVAEPLITLAKVDSVANRRLAFARLRDNEAVGNLFTILGPRYANRPGGYLRLLKCGFRAGDNAPMAYVELVDRPVVAEEVAE.

Belongs to the bacterial ribosomal protein bL17 family. As to quaternary structure, part of the 50S ribosomal subunit. Contacts protein L32.

In Stenotrophomonas maltophilia (strain K279a), this protein is Large ribosomal subunit protein bL17.